The chain runs to 433 residues: 3-phosphoshikimate 1-carboxyvinyltransferase (433 aa).

3 residues coordinate 3-phosphoshikimate: lysine 15, serine 16, and arginine 20. Lysine 15 is a binding site for phosphoenolpyruvate. Residues glycine 96 and arginine 124 each coordinate phosphoenolpyruvate. Positions 169, 171, 318, and 345 each coordinate 3-phosphoshikimate. Phosphoenolpyruvate is bound at residue glutamine 171. Residue aspartate 318 is the Proton acceptor of the active site. 2 residues coordinate phosphoenolpyruvate: arginine 349 and arginine 393.

This sequence belongs to the EPSP synthase family. Monomer.

It is found in the cytoplasm. The enzyme catalyses 3-phosphoshikimate + phosphoenolpyruvate = 5-O-(1-carboxyvinyl)-3-phosphoshikimate + phosphate. It functions in the pathway metabolic intermediate biosynthesis; chorismate biosynthesis; chorismate from D-erythrose 4-phosphate and phosphoenolpyruvate: step 6/7. In terms of biological role, catalyzes the transfer of the enolpyruvyl moiety of phosphoenolpyruvate (PEP) to the 5-hydroxyl of shikimate-3-phosphate (S3P) to produce enolpyruvyl shikimate-3-phosphate and inorganic phosphate. The polypeptide is 3-phosphoshikimate 1-carboxyvinyltransferase (Chlorobium phaeovibrioides (strain DSM 265 / 1930) (Prosthecochloris vibrioformis (strain DSM 265))).